Consider the following 206-residue polypeptide: LexA repressor (206 aa).

Residues 28–48 constitute a DNA-binding region (H-T-H motif); sequence RAEIATRLGFKSANAAEEHLK. Active-site for autocatalytic cleavage activity residues include Ser123 and Lys160.

This sequence belongs to the peptidase S24 family. As to quaternary structure, homodimer.

The catalysed reaction is Hydrolysis of Ala-|-Gly bond in repressor LexA.. In terms of biological role, represses a number of genes involved in the response to DNA damage (SOS response), including recA and lexA. In the presence of single-stranded DNA, RecA interacts with LexA causing an autocatalytic cleavage which disrupts the DNA-binding part of LexA, leading to derepression of the SOS regulon and eventually DNA repair. This is LexA repressor from Shewanella putrefaciens (strain CN-32 / ATCC BAA-453).